The following is a 155-amino-acid chain: Large ribosomal subunit protein eL24 (155 aa).

Residues 87–155 are disordered; sequence LELIKERRSQ…SFQKVKATSR (69 aa). A compositionally biased stretch (basic and acidic residues) spans 89-129; the sequence is LIKERRSQKPSDRKAARDSKLAKDKEAKKAAKAARKAEKAK. Positions 130–143 are enriched in low complexity; the sequence is AVASGASVVSKQQA.

This sequence belongs to the eukaryotic ribosomal protein eL24 family. In terms of assembly, component of the large ribosomal subunit. Mature ribosomes consist of a small (40S) and a large (60S) subunit. The 40S subunit contains about 32 different proteins and 1 molecule of RNA (18S). The 60S subunit contains 45 different proteins and 3 molecules of RNA (25S, 5.8S and 5S).

Its subcellular location is the cytoplasm. Its function is as follows. Component of the ribosome, a large ribonucleoprotein complex responsible for the synthesis of proteins in the cell. The small ribosomal subunit (SSU) binds messenger RNAs (mRNAs) and translates the encoded message by selecting cognate aminoacyl-transfer RNA (tRNA) molecules. The large subunit (LSU) contains the ribosomal catalytic site termed the peptidyl transferase center (PTC), which catalyzes the formation of peptide bonds, thereby polymerizing the amino acids delivered by tRNAs into a polypeptide chain. The nascent polypeptides leave the ribosome through a tunnel in the LSU and interact with protein factors that function in enzymatic processing, targeting, and the membrane insertion of nascent chains at the exit of the ribosomal tunnel. This Candida albicans (strain SC5314 / ATCC MYA-2876) (Yeast) protein is Large ribosomal subunit protein eL24.